A 258-amino-acid polypeptide reads, in one-letter code: Trans-aconitate 2-methyltransferase (258 aa).

It belongs to the methyltransferase superfamily. Tam family.

It is found in the cytoplasm. The enzyme catalyses trans-aconitate + S-adenosyl-L-methionine = (E)-3-(methoxycarbonyl)pent-2-enedioate + S-adenosyl-L-homocysteine. In terms of biological role, catalyzes the S-adenosylmethionine monomethyl esterification of trans-aconitate. This chain is Trans-aconitate 2-methyltransferase, found in Acidovorax ebreus (strain TPSY) (Diaphorobacter sp. (strain TPSY)).